The sequence spans 183 residues: Transcription termination/antitermination protein NusG (183 aa).

Residues 131–161 (PGEEVRVTEGPFADFNGTVEEVDYEKGRLKV) enclose the KOW domain.

This sequence belongs to the NusG family.

Participates in transcription elongation, termination and antitermination. This is Transcription termination/antitermination protein NusG from Pasteurella multocida (strain Pm70).